A 200-amino-acid chain; its full sequence is 3-isopropylmalate dehydratase small subunit (200 aa).

This sequence belongs to the LeuD family. LeuD type 1 subfamily. As to quaternary structure, heterodimer of LeuC and LeuD.

The catalysed reaction is (2R,3S)-3-isopropylmalate = (2S)-2-isopropylmalate. It participates in amino-acid biosynthesis; L-leucine biosynthesis; L-leucine from 3-methyl-2-oxobutanoate: step 2/4. Functionally, catalyzes the isomerization between 2-isopropylmalate and 3-isopropylmalate, via the formation of 2-isopropylmaleate. The protein is 3-isopropylmalate dehydratase small subunit of Aliivibrio fischeri (strain ATCC 700601 / ES114) (Vibrio fischeri).